We begin with the raw amino-acid sequence, 53 residues long: Conotoxin Ac4.3b (53 aa).

Positions 1-11 (SDVRNAAVHER) are excised as a propeptide. The residue at position 12 (Gln-12) is a Pyrrolidone carboxylic acid. Glu-14 bears the 4-carboxyglutamate mark. The O-linked (HexNAc...) serine glycan is linked to Ser-18. Pro-28, Pro-33, and Pro-48 each carry 4-hydroxyproline. Residue Pro-48 is modified to Proline amide. The propeptide occupies 49–53 (GRRND).

The protein belongs to the conotoxin A superfamily. Contains 3 disulfide bonds. As to expression, expressed by the venom duct.

The protein localises to the secreted. Functionally, probable neurotoxin with ion channel inhibitor activity. This Conus achatinus (Little frog cone) protein is Conotoxin Ac4.3b.